The sequence spans 673 residues: DNA ligase (673 aa).

NAD(+) contacts are provided by residues 33–37 (DHQYD), 83–84 (SL), and Glu-117. Catalysis depends on Lys-119, which acts as the N6-AMP-lysine intermediate. Residues Arg-140, Glu-175, Lys-282, and Lys-306 each coordinate NAD(+). Residues Cys-400, Cys-403, Cys-418, and Cys-424 each contribute to the Zn(2+) site. The region spanning 592–673 (RGSSAISGKT…WVKMVEDARS (82 aa)) is the BRCT domain.

It belongs to the NAD-dependent DNA ligase family. LigA subfamily. Requires Mg(2+) as cofactor. The cofactor is Mn(2+).

It carries out the reaction NAD(+) + (deoxyribonucleotide)n-3'-hydroxyl + 5'-phospho-(deoxyribonucleotide)m = (deoxyribonucleotide)n+m + AMP + beta-nicotinamide D-nucleotide.. Functionally, DNA ligase that catalyzes the formation of phosphodiester linkages between 5'-phosphoryl and 3'-hydroxyl groups in double-stranded DNA using NAD as a coenzyme and as the energy source for the reaction. It is essential for DNA replication and repair of damaged DNA. The protein is DNA ligase of Anaplasma marginale (strain Florida).